A 178-amino-acid chain; its full sequence is Endothelin-2 (178 aa).

Positions M1 to V26 are cleaved as a signal peptide. Residues A27–P46 constitute a propeptide that is removed on maturation. Cystine bridges form between C49–C63 and C51–C59. A propeptide spanning residues V70–R178 is cleaved from the precursor. The interval C96 to H111 is endothelin-like.

Belongs to the endothelin/sarafotoxin family.

The protein resides in the secreted. Functionally, endothelins are endothelium-derived vasoconstrictor peptides. The sequence is that of Endothelin-2 (EDN2) from Felis catus (Cat).